Here is a 762-residue protein sequence, read N- to C-terminus: MDFNKLYVLAQNNLFTDITIILKDESNEITLNLHKNIIYSSCIFFEKLLTSFKEKESSKIILNVPNAIIVNDIIWDFYGQKIKSHNYPEWKYFIESYKCFDYFGMNTDKKKLYKLIVEPDGFDELMDFIDLIGYDENAIEVIFNNLPDDYDLSKFSHELLTEMLSMYKKNLVQIITRNEIIVLNDFFDGTIRSTEHCINSPEVILFCASNASKIVTFDGHNIRILESNNSILLSDDSTVSDAGTILHISHSQNKNVLVILYEYRIDVWDVLINKLIASFRVPFIKKLSCSYDGSQLVYVDNNNNMIVKNILSEEIISEINLQNLPEISNNFCIPELILETNTQDLSEIPNNLYTLELKSEPDQSIDFIKSNFQHNLDNLDDLNNLDNSDDLDNSNDLNDSNDLDDSDDSNDYNNLNYDLNNLEIICSSNNEIFENVSTHYCIDVNDCNHIDNINSLNLQSPIQDLSDSLSPIDYIDSSNLQSPVQDLSDSQSSTDWIVSPNTQSPVYYLSKLDGSINGEKLSDALSIENDSISDNSDNLNNSDNSDDLDNPDNSDNLDNSDYLLEYLVNTDKTNYMFNLTYSIHTDKTNKRFNLENPYEQFNFINKFCLLYINNKVIYFIDIIDKKIIHKETCRRNIVNMRCSPTGDSIAIIDSEYIVYIYKLVTDSNGFLCYPIVDYCILVRDLFLPTKIEYSSNGRYLVFDDDGLSINLYDIEQLEMTNEFELFCDSKIIVDITFSENYCDELINRLNNALKKIEQKYPN.

Positions Thr-16–Asn-86 constitute a BTB domain. A compositionally biased stretch (acidic residues) spans Asp-390–Asn-410. Disordered stretches follow at residues Asp-390–Asp-411 and Ile-532–Asn-556. A compositionally biased stretch (low complexity) spans Ile-532–Asp-543. Residues Phe-737–Asn-762 adopt a coiled-coil conformation.

Belongs to the mimivirus BTB/WD family.

In Acanthamoeba polyphaga (Amoeba), this protein is Putative BTB/POZ domain-containing protein L272.